Reading from the N-terminus, the 447-residue chain is Nuclear envelope integral membrane protein 2 (447 aa).

Positions 1–28 are cleaved as a signal peptide; it reads MGPRRLPWARPGPALGLLLLALAGAVPA. The next 5 helical transmembrane spans lie at 144 to 164, 173 to 193, 202 to 222, 235 to 255, and 275 to 295; these read EMLDGKLLFLFAAGIFLFHFA, FFYLSGIILGVLALLVFVLLA, STFWILLSGCWMSSLYLIYCF, IYVLGYFVAVGTLSFATCYQH, and AFVFIYCGVNIPQVAYAIIAV. Residues 410–438 form a disordered region; the sequence is TRTESEQDETTSYIHEGDDENEDEIHEPI.

Belongs to the NEMP family.

It localises to the nucleus inner membrane. The sequence is that of Nuclear envelope integral membrane protein 2 (NEMP2) from Gallus gallus (Chicken).